The chain runs to 147 residues: 3-dehydroquinate dehydratase (147 aa).

Tyr-23 (proton acceptor) is an active-site residue. Substrate contacts are provided by Asn-75, His-81, and Asp-88. The active-site Proton donor is the His-101. Residues 102–103 (LS) and Arg-112 each bind substrate.

Belongs to the type-II 3-dehydroquinase family. Homododecamer.

The enzyme catalyses 3-dehydroquinate = 3-dehydroshikimate + H2O. It functions in the pathway metabolic intermediate biosynthesis; chorismate biosynthesis; chorismate from D-erythrose 4-phosphate and phosphoenolpyruvate: step 3/7. In terms of biological role, catalyzes a trans-dehydration via an enolate intermediate. The chain is 3-dehydroquinate dehydratase from Hahella chejuensis (strain KCTC 2396).